The following is a 259-amino-acid chain: MILLIDVGNTNIVLGIHDNEKYIASWRISTDSKKTSDEYSIQVMQLFNQAKLNPEEVEGIIISSVVPNIMHSLENMVRKCFCKEPIVVGPGIKTGINIKYDNPKEVGADRIVNAVAAFEKHKKPMIIIDFGTATTFCAITEKGDYLGGNICPGIQISADALFERAAKLPRIELEKPKSVICKNTVTSMQAGIIYGYIGKVEYIVKRMKKEMMDLGEKEPFVLATGGLAKLVYSETDVIDEVDRKLTLEGLKILYEKNKE.

Position 6–13 (6–13 (DVGNTNIV)) interacts with ATP. Substrate-binding positions include Tyr100 and 107–110 (GADR). Catalysis depends on Asp109, which acts as the Proton acceptor. A K(+)-binding site is contributed by Asp129. Thr132 lines the ATP pocket. Position 184 (Thr184) interacts with substrate.

Belongs to the type III pantothenate kinase family. Homodimer. The cofactor is NH4(+). It depends on K(+) as a cofactor.

Its subcellular location is the cytoplasm. It catalyses the reaction (R)-pantothenate + ATP = (R)-4'-phosphopantothenate + ADP + H(+). The protein operates within cofactor biosynthesis; coenzyme A biosynthesis; CoA from (R)-pantothenate: step 1/5. In terms of biological role, catalyzes the phosphorylation of pantothenate (Pan), the first step in CoA biosynthesis. The chain is Type III pantothenate kinase from Clostridium perfringens (strain ATCC 13124 / DSM 756 / JCM 1290 / NCIMB 6125 / NCTC 8237 / Type A).